Reading from the N-terminus, the 197-residue chain is Carbohydrate-binding domain-containing protein C2E1P3.05c (197 aa).

The signal sequence occupies residues 1-23; that stretch reads MLTQSLFLTVLTLALSLVSKTSA. CBM1 domains are found at residues 25–61 and 68–104; these read QCSPRYGTCGGIYYDGPTCCVVGSSCIYSNPWYSQCI and PCAKLYQQCGGINYNGPTCCEPGSECIYNGPYYSQCI. Intrachain disulfides connect Cys-33/Cys-50, Cys-44/Cys-60, Cys-76/Cys-93, and Cys-87/Cys-103. The interval 115–163 is disordered; the sequence is SSAASSTTSTTSSSSLVSSTTLTSSSPSAVSSTTSIPSISSTISSSVST. N-linked (GlcNAc...) asparagine glycans are attached at residues Asn-182 and Asn-193.

The protein resides in the secreted. The sequence is that of Carbohydrate-binding domain-containing protein C2E1P3.05c from Schizosaccharomyces pombe (strain 972 / ATCC 24843) (Fission yeast).